A 474-amino-acid polypeptide reads, in one-letter code: Glycogen synthase (474 aa).

Lys15 contacts ADP-alpha-D-glucose.

It belongs to the glycosyltransferase 1 family. Bacterial/plant glycogen synthase subfamily.

It carries out the reaction [(1-&gt;4)-alpha-D-glucosyl](n) + ADP-alpha-D-glucose = [(1-&gt;4)-alpha-D-glucosyl](n+1) + ADP + H(+). It functions in the pathway glycan biosynthesis; glycogen biosynthesis. Synthesizes alpha-1,4-glucan chains using ADP-glucose. The polypeptide is Glycogen synthase (Chlamydia trachomatis serovar A (strain ATCC VR-571B / DSM 19440 / HAR-13)).